Reading from the N-terminus, the 325-residue chain is Taste receptor type 2 member 7 (325 aa).

Residues 1 to 9 (MADKVQTTL) are Extracellular-facing. A helical transmembrane segment spans residues 10-30 (LFLAVGEFSVGILGNAFIGLV). Residues 31-55 (NCMDWVKKRKIASIDLILTSLAISR) are Cytoplasmic-facing. Residues 56 to 76 (ICLLCVILLDCFILVLYPDVY) traverse the membrane as a helical segment. Residues 77 to 94 (ATGKEMRIIDFFWTLTNH) lie on the Extracellular side of the membrane. Residues 95 to 115 (LSIWFATCLSIYYFFRIANFF) traverse the membrane as a helical segment. Topologically, residues 116 to 128 (HPLFLWMKWRIDR) are cytoplasmic. Residues 129-149 (VISWILLGCVVLSVFISLPAT) form a helical membrane-spanning segment. At 150–187 (ENLNADFRFCVKAKRKTNLTWSCRVNKTQHASTKLFLN) the chain is on the extracellular side. Residues Asn167 and Asn175 are each glycosylated (N-linked (GlcNAc...) asparagine). Residues 188–208 (LATLLPFCVCLMSFFLLILSL) traverse the membrane as a helical segment. Topologically, residues 209–235 (RRHIRRMQLSATGCRDPSTEAHVRALK) are cytoplasmic. Residues 236–256 (AVISFLLLFIAYYLSFLVATS) traverse the membrane as a helical segment. Topologically, residues 257 to 266 (SYFMPETELA) are extracellular. A helical membrane pass occupies residues 267-287 (VIFGESIALIYPSSHSFILIL). Over 288 to 319 (GNNKLRHASLKVIWKVMSILKGRKFQQHKQIG) the chain is Cytoplasmic.

This sequence belongs to the G-protein coupled receptor T2R family.

The protein localises to the membrane. Functionally, gustducin-coupled receptor implicated in the perception of bitter compounds in the oral cavity and the gastrointestinal tract. Signals through PLCB2 and the calcium-regulated cation channel TRPM5. This chain is Taste receptor type 2 member 7 (TAS2R7), found in Pan paniscus (Pygmy chimpanzee).